Here is a 258-residue protein sequence, read N- to C-terminus: MSSATQSARFSPSPISVEHLGTIGYVDAWDRQRELAAERAENVGTDTLLLLEHPAVYTAGRRTEPEDRPTDGTPVIDVDRGGKITWHGPGQLVGYPIVKLAEPVDVVRYVRRLEQALITVCTDLGIVCGRVDGRSGVWLPASFDNGQWLPERKVAAIGVRVQRGVALHGFSLNCNSVLTGFDAIIPCGIRDAGVTSLSRELGRDVTVEEVTPAVTAAVVAALDGELPVTEHDIERVTFDSAAAGTTSSAPTFTTVQYG.

Residues 42–226 (NVGTDTLLLL…AVVAALDGEL (185 aa)) form the BPL/LPL catalytic domain. Substrate-binding positions include 80-87 (RGGKITWH), 156-158 (AIG), and 169-171 (GFS). Cysteine 187 (acyl-thioester intermediate) is an active-site residue.

Belongs to the LipB family.

Its subcellular location is the cytoplasm. It carries out the reaction octanoyl-[ACP] + L-lysyl-[protein] = N(6)-octanoyl-L-lysyl-[protein] + holo-[ACP] + H(+). It functions in the pathway protein modification; protein lipoylation via endogenous pathway; protein N(6)-(lipoyl)lysine from octanoyl-[acyl-carrier-protein]: step 1/2. Its function is as follows. Catalyzes the transfer of endogenously produced octanoic acid from octanoyl-acyl-carrier-protein onto the lipoyl domains of lipoate-dependent enzymes. Lipoyl-ACP can also act as a substrate although octanoyl-ACP is likely to be the physiological substrate. The polypeptide is Octanoyltransferase (Rhodococcus jostii (strain RHA1)).